We begin with the raw amino-acid sequence, 197 residues long: Lipid A acyltransferase PagP (197 aa).

Positions 1–24 (MMFFKRTILACTVALLFPALPSYA) are cleaved as a signal peptide. Residues histidine 69, aspartate 112, and serine 113 contribute to the active site.

Belongs to the lipid A palmitoyltransferase family. Homodimer.

The protein resides in the cell outer membrane. It catalyses the reaction a lipid A + a 1,2-diacyl-sn-glycero-3-phosphocholine = a hepta-acyl lipid A + a 2-acyl-sn-glycero-3-phosphocholine. The enzyme catalyses a lipid IVA + a 1,2-diacyl-sn-glycero-3-phosphocholine = a lipid IVB + a 2-acyl-sn-glycero-3-phosphocholine. The catalysed reaction is a lipid IIA + a 1,2-diacyl-sn-glycero-3-phosphocholine = a lipid IIB + a 2-acyl-sn-glycero-3-phosphocholine. Its function is as follows. Transfers a fatty acid residue from the sn-1 position of a phospholipid to the N-linked hydroxyfatty acid chain on the proximal unit of lipid A or its precursors. This is Lipid A acyltransferase PagP from Serratia proteamaculans (strain 568).